A 163-amino-acid chain; its full sequence is 2-C-methyl-D-erythritol 2,4-cyclodiphosphate synthase (163 aa).

A divalent metal cation-binding residues include aspartate 12 and histidine 14. 4-CDP-2-C-methyl-D-erythritol 2-phosphate contacts are provided by residues 12–14 (DVH) and 38–39 (HS). Histidine 46 provides a ligand contact to a divalent metal cation. Residues 60–62 (DIG), 136–139 (TTSE), phenylalanine 143, and arginine 146 each bind 4-CDP-2-C-methyl-D-erythritol 2-phosphate.

The protein belongs to the IspF family. As to quaternary structure, homotrimer. A divalent metal cation serves as cofactor.

It carries out the reaction 4-CDP-2-C-methyl-D-erythritol 2-phosphate = 2-C-methyl-D-erythritol 2,4-cyclic diphosphate + CMP. The protein operates within isoprenoid biosynthesis; isopentenyl diphosphate biosynthesis via DXP pathway; isopentenyl diphosphate from 1-deoxy-D-xylulose 5-phosphate: step 4/6. In terms of biological role, involved in the biosynthesis of isopentenyl diphosphate (IPP) and dimethylallyl diphosphate (DMAPP), two major building blocks of isoprenoid compounds. Catalyzes the conversion of 4-diphosphocytidyl-2-C-methyl-D-erythritol 2-phosphate (CDP-ME2P) to 2-C-methyl-D-erythritol 2,4-cyclodiphosphate (ME-CPP) with a corresponding release of cytidine 5-monophosphate (CMP). This Xanthomonas oryzae pv. oryzae (strain MAFF 311018) protein is 2-C-methyl-D-erythritol 2,4-cyclodiphosphate synthase.